The primary structure comprises 704 residues: MPNLLLELRSEEIPARMQRKAAGDLKKLVTDALVEAGLSYEGAREYWTPRRLALDIHGLTARSADVREERKGPRTDANEKAIEGFLRGAGLSSVSEAQVVSDPKKGDFYVAVISKPGRATEEIVAEVMPGIIRDFPWPKSMRWGKASSKSGALRWVRPLQSIVCTFGPEHEETTVIPFEIDGITASNITYGHRFHAPEAITVRRFDDYAASLEKAKVILDAERRKDIILHDARDIAFANGLELVEDEGLLEEVSGLVEWPQVLMGSFEEDYLSIPSEIIRLTIKTNQKCFVTRKQGEDTLSNRFILVSNIQAHDGGKEIVHGNGKVVRARLSDALHFWKRDQGNLPDLETLAASAAKFGLDLQKPLDQRMAKLDALDVTFHAKLGTQGARVARIRALAKELAAITGADPALTDRAAVLAKADLRTEAVGEFPELQGLMGRKYAVLQGENASVAAAVEDHYKPQGPSDRVPEDKVAITLALADKLDTLTGFWAIDEKPTGSKDPFALRRAALGVVRILLERRVRLPLLATTRDGDLLSFFHDRLKVYLRDQGARYDLIDAVLTPDADDLLMVARRVEALTAFITSEDGKNLLAGTKRATQLLAAEEKKGTVIADGVSPALLKLDAEKELFAAISSASKDAADAVAGEDFRSAMEALSKLRGPVDRFFEEVLVNDEDAAIRANRLALLRLIREATGTVADFSKISG.

This sequence belongs to the class-II aminoacyl-tRNA synthetase family. Tetramer of two alpha and two beta subunits.

Its subcellular location is the cytoplasm. The enzyme catalyses tRNA(Gly) + glycine + ATP = glycyl-tRNA(Gly) + AMP + diphosphate. This Rhizobium etli (strain CIAT 652) protein is Glycine--tRNA ligase beta subunit.